The chain runs to 157 residues: Ribosome-binding factor A (157 aa).

The segment at Q127 to D157 is disordered. Over residues A135 to D157 the composition is skewed to acidic residues.

Belongs to the RbfA family. Monomer. Binds 30S ribosomal subunits, but not 50S ribosomal subunits or 70S ribosomes.

It is found in the cytoplasm. Its function is as follows. One of several proteins that assist in the late maturation steps of the functional core of the 30S ribosomal subunit. Associates with free 30S ribosomal subunits (but not with 30S subunits that are part of 70S ribosomes or polysomes). Required for efficient processing of 16S rRNA. May interact with the 5'-terminal helix region of 16S rRNA. This is Ribosome-binding factor A from Shewanella baltica (strain OS155 / ATCC BAA-1091).